The primary structure comprises 499 residues: Calcium/calmodulin-dependent protein kinase type II subunit delta (499 aa).

Residue Ala2 is modified to N-acetylalanine. In terms of domain architecture, Protein kinase spans 14 to 272 (YQLFEELGKG…ASEALKHPWI (259 aa)). Residues 20 to 28 (LGKGAFSVV) and Lys43 each bind ATP. The Proton acceptor role is filled by Asp136. The tract at residues 283–292 (HRQETVDCLK) is autoinhibitory domain. Thr287 is subject to Phosphothreonine; by autocatalysis. The tract at residues 291-301 (LKKFNARRKLK) is calmodulin-binding. A phosphothreonine; by autocatalysis mark is found at Thr306 and Thr307. Ser315 bears the Phosphoserine mark. At Lys318 the chain carries N6-acetyllysine. Residues Ser319 and Ser330 each carry the phosphoserine modification. Thr331 carries the post-translational modification Phosphothreonine. Ser333 carries the post-translational modification Phosphoserine. Phosphothreonine is present on residues Thr336 and Thr337. Phosphoserine occurs at positions 404, 490, and 494.

The protein belongs to the protein kinase superfamily. CAMK Ser/Thr protein kinase family. CaMK subfamily. As to quaternary structure, CAMK2 is composed of 4 different chains: alpha (CAMK2A), beta (CAMK2B), gamma (CAMK2G), and delta (CAMK2D). The different isoforms assemble into homo- or heteromultimeric holoenzymes composed of 12 subunits with two hexameric rings stacked one on top of the other. Interacts with RRAD CACNB2. Post-translationally, autophosphorylation of Thr-287 following activation by Ca(2+)/calmodulin. Phosphorylation of Thr-287 locks the kinase into an activated state.

It localises to the cell membrane. It is found in the sarcolemma. The protein resides in the sarcoplasmic reticulum membrane. The enzyme catalyses L-seryl-[protein] + ATP = O-phospho-L-seryl-[protein] + ADP + H(+). The catalysed reaction is L-threonyl-[protein] + ATP = O-phospho-L-threonyl-[protein] + ADP + H(+). Activated by Ca(2+)/calmodulin. Binding of calmodulin results in conformational change that relieves intrasteric autoinhibition and allows autophosphorylation of Thr-287 which turns the kinase in a constitutively active form and confers to the kinase a Ca(2+)-independent activity. Calcium/calmodulin-dependent protein kinase involved in the regulation of Ca(2+) homeostatis and excitation-contraction coupling (ECC) in heart by targeting ion channels, transporters and accessory proteins involved in Ca(2+) influx into the myocyte, Ca(2+) release from the sarcoplasmic reticulum (SR), SR Ca(2+) uptake and Na(+) and K(+) channel transport. Targets also transcription factors and signaling molecules to regulate heart function. In its activated form, is involved in the pathogenesis of dilated cardiomyopathy and heart failure. Contributes to cardiac decompensation and heart failure by regulating SR Ca(2+) release via direct phosphorylation of RYR2 Ca(2+) channel on 'Ser-2808'. In the nucleus, phosphorylates the MEF2 repressor HDAC4, promoting its nuclear export and binding to 14-3-3 protein, and expression of MEF2 and genes involved in the hypertrophic program. Is essential for left ventricular remodeling responses to myocardial infarction. In pathological myocardial remodeling acts downstream of the beta adrenergic receptor signaling cascade to regulate key proteins involved in ECC. Regulates Ca(2+) influx to myocytes by binding and phosphorylating the L-type Ca(2+) channel subunit beta-2 CACNB2. In addition to Ca(2+) channels, can target and regulate the cardiac sarcolemmal Na(+) channel Nav1.5/SCN5A and the K+ channel Kv4.3/KCND3, which contribute to arrhythmogenesis in heart failure. Phosphorylates phospholamban (PLN/PLB), an endogenous inhibitor of SERCA2A/ATP2A2, contributing to the enhancement of SR Ca(2+) uptake that may be important in frequency-dependent acceleration of relaxation (FDAR) and maintenance of contractile function during acidosis. May participate in the modulation of skeletal muscle function in response to exercise, by regulating SR Ca(2+) transport through phosphorylation of PLN/PLB and triadin, a ryanodine receptor-coupling factor. In response to interferon-gamma (IFN-gamma) stimulation, catalyzes phosphorylation of STAT1, stimulating the JAK-STAT signaling pathway. In Sus scrofa (Pig), this protein is Calcium/calmodulin-dependent protein kinase type II subunit delta (CAMK2D).